The chain runs to 391 residues: Deoxyguanosinetriphosphate triphosphohydrolase-like protein (391 aa).

Residues 62 to 198 (RLTHSLEVST…ASLADDISYI (137 aa)) form the HD domain.

It belongs to the dGTPase family. Type 2 subfamily.

The sequence is that of Deoxyguanosinetriphosphate triphosphohydrolase-like protein from Rickettsia akari (strain Hartford).